A 201-amino-acid chain; its full sequence is Glutathione peroxidase 1 (201 aa).

At serine 32 the chain carries Phosphoserine. The active site involves selenocysteine 47. Position 47 (selenocysteine 47) is a non-standard amino acid, selenocysteine. N6-acetyllysine; alternate is present on residues lysine 86, lysine 112, and lysine 146. N6-succinyllysine; alternate is present on residues lysine 86, lysine 112, and lysine 146. Phosphoserine is present on residues serine 195 and serine 199.

Belongs to the glutathione peroxidase family. Homotetramer. Interacts with MIEN1. Post-translationally, during periods of oxidative stress, Sec-47 may react with a superoxide radical, irreversibly lose hydroselenide and be converted to dehydroalanine.

It localises to the cytoplasm. It is found in the mitochondrion. The enzyme catalyses 2 glutathione + H2O2 = glutathione disulfide + 2 H2O. The catalysed reaction is a hydroperoxy polyunsaturated fatty acid + 2 glutathione = a hydroxy polyunsaturated fatty acid + glutathione disulfide + H2O. It carries out the reaction tert-butyl hydroperoxide + 2 glutathione = tert-butanol + glutathione disulfide + H2O. It catalyses the reaction cumene hydroperoxide + 2 glutathione = 2-phenylpropan-2-ol + glutathione disulfide + H2O. The enzyme catalyses (13S)-hydroperoxy-(9Z,11E)-octadecadienoate + 2 glutathione = (13S)-hydroxy-(9Z,11E)-octadecadienoate + glutathione disulfide + H2O. The catalysed reaction is (9S)-hydroperoxy-(10E,12Z)-octadecadienoate + 2 glutathione = (9S)-hydroxy-(10E,12Z)-octadecadienoate + glutathione disulfide + H2O. It carries out the reaction (5S)-hydroperoxy-(6E,8Z,11Z,14Z)-eicosatetraenoate + 2 glutathione = (5S)-hydroxy-(6E,8Z,11Z,14Z)-eicosatetraenoate + glutathione disulfide + H2O. It catalyses the reaction (12S)-hydroperoxy-(5Z,8Z,10E,14Z)-eicosatetraenoate + 2 glutathione = (12S)-hydroxy-(5Z,8Z,10E,14Z)-eicosatetraenoate + glutathione disulfide + H2O. The enzyme catalyses (12R)-hydroperoxy-(5Z,8Z,10E,14Z)-eicosatetraenoate + 2 glutathione = (12R)-hydroxy-(5Z,8Z,10E,14Z)-eicosatetraenoate + glutathione disulfide + H2O. The catalysed reaction is (15S)-hydroperoxy-(5Z,8Z,11Z,13E)-eicosatetraenoate + 2 glutathione = (15S)-hydroxy-(5Z,8Z,11Z,13E)-eicosatetraenoate + glutathione disulfide + H2O. It carries out the reaction (5S)-hydroperoxy-(6E,8Z,11Z,14Z,17Z)-eicosapentaenoate + 2 glutathione = (5S)-hydroxy-(6E,8Z,11Z,14Z,17Z)-eicosapentaenoate + glutathione disulfide + H2O. It catalyses the reaction (12S)-hydroperoxy-(5Z,8Z,10E,14Z,17Z)-eicosapentaenoate + 2 glutathione = (12S)-hydroxy-(5Z,8Z,10E,14Z,17Z)-eicosapentaenoate + glutathione disulfide + H2O. The enzyme catalyses (15S)-hydroperoxy-(5Z,8Z,11Z,13E,17Z)-eicosapentaenoate + 2 glutathione = (15S)-hydroxy-(5Z,8Z,11Z,13E,17Z)-eicosapentaenoate + glutathione disulfide + H2O. The catalysed reaction is (15S)-hydroperoxy-(11Z,13E)-eicosadienoate + 2 glutathione = (15S)-hydroxy-(11Z,13E)-eicosadienoate + glutathione disulfide + H2O. It carries out the reaction (17S)-hydroperoxy-(4Z,7Z,10Z,13Z,15E,19Z)-docosahexaenoate + 2 glutathione = (17S)-hydroxy-(4Z,7Z,10Z,13Z,15E,19Z)-docosahexaenoate + glutathione disulfide + H2O. In terms of biological role, catalyzes the reduction of hydroperoxides in a glutathione-dependent manner thus regulating cellular redox homeostasis. Can reduce small soluble hydroperoxides such as H2O2, cumene hydroperoxide and tert-butyl hydroperoxide, as well as several fatty acid-derived hydroperoxides. In platelets catalyzes the reduction of 12-hydroperoxyeicosatetraenoic acid, the primary product of the arachidonate 12-lipoxygenase pathway. This chain is Glutathione peroxidase 1 (GPX1), found in Callithrix jacchus (White-tufted-ear marmoset).